Here is a 201-residue protein sequence, read N- to C-terminus: Potassium-transporting ATPase KdpC subunit (201 aa).

The helical transmembrane segment at 10-30 (VLLVALTAVTGLAYPLAVTGI) threads the bilayer.

It belongs to the KdpC family. In terms of assembly, the system is composed of three essential subunits: KdpA, KdpB and KdpC.

The protein localises to the cell inner membrane. In terms of biological role, part of the high-affinity ATP-driven potassium transport (or Kdp) system, which catalyzes the hydrolysis of ATP coupled with the electrogenic transport of potassium into the cytoplasm. This subunit acts as a catalytic chaperone that increases the ATP-binding affinity of the ATP-hydrolyzing subunit KdpB by the formation of a transient KdpB/KdpC/ATP ternary complex. The polypeptide is Potassium-transporting ATPase KdpC subunit (Methylorubrum extorquens (strain PA1) (Methylobacterium extorquens)).